We begin with the raw amino-acid sequence, 186 residues long: MISSNDFRTGTTIELDGQVWRVVEFLHVKPGKGSAFVRTKLKSVQSGNVVEKTFRAGESVQQAILEKSNLQHTYVESGDYVFMDMSSFEETRLTSEQIGRGAKYLKEGMEVNVIFHNGKVLEVELPISITLKVTETDPGVKGDTASGGTKPAILETGAQVMVPLFISVGEMIKVDTRNDSYLGREN.

It belongs to the elongation factor P family.

The protein resides in the cytoplasm. Its pathway is protein biosynthesis; polypeptide chain elongation. Its function is as follows. Involved in peptide bond synthesis. Stimulates efficient translation and peptide-bond synthesis on native or reconstituted 70S ribosomes in vitro. Probably functions indirectly by altering the affinity of the ribosome for aminoacyl-tRNA, thus increasing their reactivity as acceptors for peptidyl transferase. This chain is Elongation factor P, found in Prochlorococcus marinus (strain MIT 9215).